The chain runs to 101 residues: Large ribosomal subunit protein uL23 (101 aa).

The protein belongs to the universal ribosomal protein uL23 family. As to quaternary structure, part of the 50S ribosomal subunit. Contacts protein L29, and trigger factor when it is bound to the ribosome.

In terms of biological role, one of the early assembly proteins it binds 23S rRNA. One of the proteins that surrounds the polypeptide exit tunnel on the outside of the ribosome. Forms the main docking site for trigger factor binding to the ribosome. This Trichodesmium erythraeum (strain IMS101) protein is Large ribosomal subunit protein uL23.